A 213-amino-acid chain; its full sequence is MKRRISTIANLVLQQKPKAFYDIGCDHGYLARELVQQNPSLVGVNSDISANALGAAKGLLKDHTNMHFITSDGFDLLPNLNLDPAVGVIAGLGGLKIMQILAQHNNFLKHFVLQPQSNIIELRRFLSANQWTITTETLVEERGFIYLVLAVDKTKAQTQYLTEEQMILGPHLVNFTDKQMLVKYYNGLLKNFTARLNPSQFDSQVIHVLNKII.

It belongs to the TrmK family.

It localises to the cytoplasm. The polypeptide is Putative tRNA methyltransferase MPN_351 (Mycoplasma pneumoniae (strain ATCC 29342 / M129 / Subtype 1) (Mycoplasmoides pneumoniae)).